A 387-amino-acid chain; its full sequence is Exodeoxyribonuclease 7 large subunit (387 aa).

It belongs to the XseA family. Heterooligomer composed of large and small subunits.

It is found in the cytoplasm. It carries out the reaction Exonucleolytic cleavage in either 5'- to 3'- or 3'- to 5'-direction to yield nucleoside 5'-phosphates.. Its function is as follows. Bidirectionally degrades single-stranded DNA into large acid-insoluble oligonucleotides, which are then degraded further into small acid-soluble oligonucleotides. This chain is Exodeoxyribonuclease 7 large subunit, found in Campylobacter fetus subsp. fetus (strain 82-40).